Here is a 33-residue protein sequence, read N- to C-terminus: Ranatuerin-1T (33 aa).

Cys27 and Cys33 are joined by a disulfide.

As to expression, expressed by the skin glands.

Its subcellular location is the secreted. Antibacterial activity against Gram-positive bacterium S.aureus and Gram-negative bacterium E.coli. No activity against C.albicans. This is Ranatuerin-1T from Rana temporaria (European common frog).